The primary structure comprises 170 residues: VIP peptides (170 aa).

A signal peptide spans 1–21; the sequence is MEARSKPQFLAFLILFSVLFS. A propeptide spanning residues 22–79 is cleaved from the precursor; that stretch reads QSLAWPLFGPPSVVRLDDRMPFEGAGDPDQVSLKADSDILQNPLAENGTPYYDVSRNA. Serine 76 is subject to Phosphoserine. Isoleucine 107 is modified (isoleucine amide). N-linked (GlcNAc...) asparagine glycosylation occurs at asparagine 133. Position 152 is an asparagine amide (asparagine 152). The propeptide occupies 156–170; the sequence is SSEGDSADFLEELEK.

Belongs to the glucagon family.

It is found in the secreted. Functionally, VIP is a neuropeptide involved in a diverse array of physiological processes through activating the PACAP subfamily of class B1 G protein-coupled receptors: VIP receptor 1 (VPR1) and VIP receptor 2 (VPR2). Abundantly expressed throughout the CNS and peripheral nervous systems where they primarily exert neuroprotective and immune modulatory roles. Also causes vasodilation, lowers arterial blood pressure, stimulates myocardial contractility, increases glycogenolysis and relaxes the smooth muscle of trachea, stomach and gall bladder. In terms of biological role, PHM-27 and PHV-42 are two bioactive forms from proteolysis of the same precursor protein, that cause vasodilation. PHM-27 is a potent agonist of the calcitonin receptor CALCR, with similar efficacy as calcitonin. The protein is VIP peptides (Vip) of Mus musculus (Mouse).